Here is a 478-residue protein sequence, read N- to C-terminus: Ribosomal RNA small subunit methyltransferase F (478 aa).

S-adenosyl-L-methionine is bound by residues 125–131, Glu-149, Asp-176, and Asp-194; that span reads AAAPGSK. Residue Cys-247 is the Nucleophile of the active site.

Belongs to the class I-like SAM-binding methyltransferase superfamily. RsmB/NOP family.

It is found in the cytoplasm. It catalyses the reaction cytidine(1407) in 16S rRNA + S-adenosyl-L-methionine = 5-methylcytidine(1407) in 16S rRNA + S-adenosyl-L-homocysteine + H(+). In terms of biological role, specifically methylates the cytosine at position 1407 (m5C1407) of 16S rRNA. This chain is Ribosomal RNA small subunit methyltransferase F, found in Serratia proteamaculans (strain 568).